A 325-amino-acid chain; its full sequence is GMP reductase (325 aa).

Residue Cys-173 is the Thioimidate intermediate of the active site. 202–225 contacts NADP(+); the sequence is IIADGGIRSHGDIAKSVRFGATMV.

Belongs to the IMPDH/GMPR family. GuaC type 2 subfamily.

The catalysed reaction is IMP + NH4(+) + NADP(+) = GMP + NADPH + 2 H(+). Its function is as follows. Catalyzes the irreversible NADPH-dependent deamination of GMP to IMP. It functions in the conversion of nucleobase, nucleoside and nucleotide derivatives of G to A nucleotides, and in maintaining the intracellular balance of A and G nucleotides. In Acidovorax sp. (strain JS42), this protein is GMP reductase.